Here is a 344-residue protein sequence, read N- to C-terminus: Ribosomal RNA large subunit methyltransferase Cfr (344 aa).

Glu90 functions as the Proton acceptor in the catalytic mechanism. The region spanning 97–330 is the Radical SAM core domain; it reads KQGWESFCIS…ATVRTQFGSE (234 aa). Cys104 and Cys335 form a disulfide bridge. Residues Cys111, Cys115, and Cys118 each contribute to the [4Fe-4S] cluster site. S-adenosyl-L-methionine is bound by residues 157–158, Ser188, 211–213, and Asn292; these read GE and SLH. Cys335 functions as the S-methylcysteine intermediate in the catalytic mechanism.

The protein belongs to the radical SAM superfamily. RlmN family. Cfr subfamily. Requires [4Fe-4S] cluster as cofactor.

Its subcellular location is the cytoplasm. It catalyses the reaction adenosine(2503) in 23S rRNA + 2 reduced [2Fe-2S]-[ferredoxin] + 2 S-adenosyl-L-methionine = 8-methyladenosine(2503) in 23S rRNA + 5'-deoxyadenosine + L-methionine + 2 oxidized [2Fe-2S]-[ferredoxin] + S-adenosyl-L-homocysteine. In terms of biological role, specifically methylates position 8 of adenine 2503 in 23S rRNA. Confers resistance to some classes of antibiotics. The protein is Ribosomal RNA large subunit methyltransferase Cfr of Clostridium botulinum (strain Okra / Type B1).